Consider the following 229-residue polypeptide: Small ribosomal subunit protein uS2c (229 aa).

It belongs to the universal ribosomal protein uS2 family.

The protein localises to the plastid. The protein resides in the chloroplast. In Trieres chinensis (Marine centric diatom), this protein is Small ribosomal subunit protein uS2c (rps2).